Reading from the N-terminus, the 311-residue chain is Interleukin-20 receptor subunit beta (311 aa).

An N-terminal signal peptide occupies residues 1-29; the sequence is MQTFTMVLEEIWTSLFMWFFYALIPCLLT. Topologically, residues 30 to 233 are extracellular; that stretch reads DEVAILPAPQ…VEVQGEAIPL (204 aa). Fibronectin type-III domains lie at 37–136 and 144–228; these read APQN…RNST and EITK…EVQG. N40 carries N-linked (GlcNAc...) asparagine glycosylation. C89 and C97 form a disulfide bridge. An N-linked (GlcNAc...) asparagine glycan is attached at N134. C202 and C223 are oxidised to a cystine. Residues 234–254 form a helical membrane-spanning segment; sequence VLALFAFVGFMLILVVVPLFV. Residues 255–311 are Cytoplasmic-facing; that stretch reads WKMGRLLQYSCCPVVVLPDTLKITNSPQKLISCRREEVDACATAVMSPEELLRAWIS.

Belongs to the type II cytokine receptor family. As to quaternary structure, heterodimer with IL20RA and heterodimer with IL22RA1. Widely expressed with highest levels in skin and testis. Highly expressed in psoriatic skin.

It localises to the membrane. In terms of biological role, the IL20RA/IL20RB dimer is a receptor for IL19, IL20 and IL24. The IL22RA1/IL20RB dimer is a receptor for IL20 and IL24. This is Interleukin-20 receptor subunit beta (IL20RB) from Homo sapiens (Human).